Here is a 448-residue protein sequence, read N- to C-terminus: Ribosomal protein uS12 methylthiotransferase RimO (448 aa).

The MTTase N-terminal domain occupies 13 to 128 (KSFFITTLGC…AGEILRKNFP (116 aa)). Positions 22, 58, 91, 167, 171, and 174 each coordinate [4Fe-4S] cluster. The 230-residue stretch at 153-382 (NYSKPYSYVK…AYLGTLKTIH (230 aa)) folds into the Radical SAM core domain. The TRAM domain occupies 383 to 448 (QNRIGKIYPC…ELDMSGTWVD (66 aa)).

It belongs to the methylthiotransferase family. RimO subfamily. It depends on [4Fe-4S] cluster as a cofactor.

Its subcellular location is the cytoplasm. It carries out the reaction L-aspartate(89)-[ribosomal protein uS12]-hydrogen + (sulfur carrier)-SH + AH2 + 2 S-adenosyl-L-methionine = 3-methylsulfanyl-L-aspartate(89)-[ribosomal protein uS12]-hydrogen + (sulfur carrier)-H + 5'-deoxyadenosine + L-methionine + A + S-adenosyl-L-homocysteine + 2 H(+). Its function is as follows. Catalyzes the methylthiolation of an aspartic acid residue of ribosomal protein uS12. This is Ribosomal protein uS12 methylthiotransferase RimO from Leptospira biflexa serovar Patoc (strain Patoc 1 / Ames).